The chain runs to 833 residues: Leucine--tRNA ligase (833 aa).

A 'HIGH' region motif is present at residues 41-52 (PYPSGAGLHVGH). The 'KMSKS' region signature appears at 610–614 (KMSKS). Residue K613 participates in ATP binding.

It belongs to the class-I aminoacyl-tRNA synthetase family.

It is found in the cytoplasm. It catalyses the reaction tRNA(Leu) + L-leucine + ATP = L-leucyl-tRNA(Leu) + AMP + diphosphate. This chain is Leucine--tRNA ligase, found in Streptococcus equi subsp. zooepidemicus (strain MGCS10565).